The primary structure comprises 548 residues: Probable 2,3-bisphosphoglycerate-independent phosphoglycerate mutase (548 aa).

2 residues coordinate Mn(2+): Asp-20 and Ser-73. The active-site Phosphoserine intermediate is Ser-73. Residues His-134, 164 to 165, Arg-200, Arg-207, 279 to 282, and Lys-354 contribute to the substrate site; these read RD and RGDR. Mn(2+)-binding residues include Asp-422, His-426, Asp-463, His-464, and His-493.

The protein belongs to the BPG-independent phosphoglycerate mutase family. As to quaternary structure, monomer. Requires Mn(2+) as cofactor.

It catalyses the reaction (2R)-2-phosphoglycerate = (2R)-3-phosphoglycerate. Its pathway is carbohydrate degradation; glycolysis; pyruvate from D-glyceraldehyde 3-phosphate: step 3/5. Its function is as follows. Catalyzes the interconversion of 2-phosphoglycerate and 3-phosphoglycerate. The protein is Probable 2,3-bisphosphoglycerate-independent phosphoglycerate mutase (gpmI) of Leptospira interrogans serogroup Icterohaemorrhagiae serovar copenhageni (strain Fiocruz L1-130).